Consider the following 902-residue polypeptide: MDGTMGLQGLLCLCLASHLALQAMPTQGSPTDSTKGNKAVNGVVIRSLKVNCKVTSRFAHYVVTSQVVNNTNKPKEVAFDVEIPKTAFISDFAITADENTFVGDIKDKVTAWKQYRKAAISGENSGLVRASGRTMEQFTIHVTIGPRSKATFQLTYEEVLRRKLTQYDIVIKVKPKQLVQHFEIDVDIFEPQGISKLDAQASFLSKEAAAQLIKKSFSGKKGHVLFRPTVGQQQSCSTCSTTLLNGDFKVTYDVNREKLCDLLVANNYFAHFFAPQNLTKLNKNVVFVIDISSSMEGQKVKQTKEALLKILSDLKPGDYFDLVLFGSAVQSWRGSLVQASTANLDAARSYVRQFSLAGSTNLNGGLLRGIEILNKAQGSLPEFSNRASILIMLTDGEPTEGVTDRSQILKNVRDAIRGRFPLYNLGFGHDVEWNFLEVRALENNGRAQRIYEDHDSAQQLQGFYDQVANPLLKDVELQYPADAVLALTQHRHKQYYEGSEITVAGRIADNKLSSFKADVQASGDQGFKTTCLVDEEEMKKLLQERGHMLENYVERLWAYLTIQELLAKRMKLEWAEKASVSAKALQMSLDYQFVTPLTSMTIRGMADKDGLEPVIDKPLEDSQPLEMLGPRRKFVLSASQPSPTHPSSSIQKLPDRVTGVDTDPHFIIRVPQKEDTLCFNINEEPGVVLSLVQDPDTGFSVNGQLIGNEARCPGKHEGTYFGRLGIANPATGFQLEVTPQNITLNPGSGGPVFSWRDQASLRQDEVVVTINRKRNLGVVREDGGTFEVVLHRLWKGSAIHQDFLGFYVLDSHRMSARTHGLLAQFFHPFDYKVSDIHPGSDPTKTDATMVVKNRQLTVTRGLQKDYSKDPRHGLKVTCWFIHNNGDGLIDGVHTDYIVPDIF.

Residues 1-28 (MDGTMGLQGLLCLCLASHLALQAMPTQG) form the signal peptide. Residues 29-158 (SPTDSTKGNK…KATFQLTYEE (130 aa)) enclose the VIT domain. S-linked (Hex...) cysteine glycosylation is present at cysteine 52. Asparagine 69 is a glycosylation site (N-linked (GlcNAc...) asparagine). Serine 121 is subject to Phosphoserine. N-linked (GlcNAc...) asparagine glycosylation is present at asparagine 277. In terms of domain architecture, VWFA spans 282 to 442 (NKNVVFVIDI…WNFLEVRALE (161 aa)). Residues threonine 394 and threonine 399 each carry the phosphothreonine modification. Residues 637-651 (SASQPSPTHPSSSIQ) are compositionally biased toward polar residues. The tract at residues 637–656 (SASQPSPTHPSSSIQKLPDR) is disordered. O-linked (GalNAc...) serine glycosylation occurs at serine 639. The O-linked (GalNAc...) threonine glycan is linked to threonine 644. Aspartate 663 bears the Aspartate 1-(chondroitin 4-sulfate)-ester mark. The propeptide occupies 664 to 902 (PHFIIRVPQK…HTDYIVPDIF (239 aa)). N-linked (GlcNAc...) asparagine glycosylation occurs at asparagine 741.

The protein belongs to the ITIH family. As to quaternary structure, I-alpha-I plasma protease inhibitors are assembled from one or two heavy chains (HC) and one light chain, bikunin. Inter-alpha-inhibitor (I-alpha-I) is composed of ITIH1/HC1, ITIH2/HC2 and bikunin. Interacts with TNFAIP6 (via Link and CUB domains). Post-translationally, heavy chains are linked to bikunin via chondroitin 4-sulfate esterified to the alpha-carboxyl of the C-terminal aspartate after propeptide cleavage. The S-linked glycan is composed of two 6-carbon sugars, possibly Glc or Gal.

Its subcellular location is the secreted. May act as a carrier of hyaluronan in serum or as a binding protein between hyaluronan and other matrix protein, including those on cell surfaces in tissues to regulate the localization, synthesis and degradation of hyaluronan which are essential to cells undergoing biological processes. In Sus scrofa (Pig), this protein is Inter-alpha-trypsin inhibitor heavy chain H1 (ITIH1).